The following is a 290-amino-acid chain: 4-hydroxybenzoate octaprenyltransferase (290 aa).

The next 8 membrane-spanning stretches (helical) occupy residues 23-43 (IGAL…TPGV), 46-66 (LWIM…GCVV), 99-119 (LFVV…TMTI), 141-161 (LPQV…FAAV), 163-183 (ESVP…AVAY), 213-233 (LIIG…GELN), 234-254 (GLGW…VYQQ), and 268-288 (AFMN…MSYW).

Belongs to the UbiA prenyltransferase family. It depends on Mg(2+) as a cofactor.

The protein resides in the cell inner membrane. It carries out the reaction all-trans-octaprenyl diphosphate + 4-hydroxybenzoate = 4-hydroxy-3-(all-trans-octaprenyl)benzoate + diphosphate. It functions in the pathway cofactor biosynthesis; ubiquinone biosynthesis. Its function is as follows. Catalyzes the prenylation of para-hydroxybenzoate (PHB) with an all-trans polyprenyl group. Mediates the second step in the final reaction sequence of ubiquinone-8 (UQ-8) biosynthesis, which is the condensation of the polyisoprenoid side chain with PHB, generating the first membrane-bound Q intermediate 3-octaprenyl-4-hydroxybenzoate. This is 4-hydroxybenzoate octaprenyltransferase from Shigella flexneri.